A 179-amino-acid chain; its full sequence is UPF0227 protein VP0969 (179 aa).

This sequence belongs to the UPF0227 family.

This is UPF0227 protein VP0969 from Vibrio parahaemolyticus serotype O3:K6 (strain RIMD 2210633).